We begin with the raw amino-acid sequence, 681 residues long: Sodium-dependent phosphate transporter 1 (681 aa).

The next 6 membrane-spanning stretches (helical) occupy residues 25 to 45 (YLWMLILGFIIAFVLAFSVGA), 66 to 86 (ACILASIFETVGSVLLGAKVS), 106 to 126 (LMAGSVSAMFGSAVWQLVASF), 162 to 182 (IVMSWFISPLLSGIMSGILFF), 207 to 227 (ACTVGINLFSIMYTGAPLLGF), and 234 to 254 (GTILISVGCAVFCALIVWFFV). A phosphoserine mark is found at serine 269 and serine 273. Residues 269–296 (SPSESPLMEKKNSLKEDHEETKLSVSDI) are disordered. The span at 275 to 290 (LMEKKNSLKEDHEETK) shows a compositional bias: basic and acidic residues. Helical transmembrane passes span 515 to 535 (VSLLFQFLQILTACFGSFAHG), 562 to 582 (VATPIWLLLYGGVGICIGLWV), 604 to 624 (FSIELASALTVVIASNIGLPI), and 654 to 674 (IFMAWFVTVPISGVISAAIMA). The tract at residues 554-562 (DTGDVSSKV) is a.

It belongs to the inorganic phosphate transporter (PiT) (TC 2.A.20) family.

The protein localises to the cell membrane. It carries out the reaction 2 Na(+)(out) + phosphate(out) = 2 Na(+)(in) + phosphate(in). Functionally, sodium-phosphate symporter which preferentially transports the monovalent form of phosphate with a stoichiometry of two sodium ions per phosphate ion. May play a role in extracellular matrix and cartilage calcification as well as in vascular calcification. Essential for cell proliferation but this function is independent of its phosphate transporter activity. The polypeptide is Sodium-dependent phosphate transporter 1 (Slc20a1) (Felis catus (Cat)).